The chain runs to 274 residues: HTH-type transcriptional regulator GadX (274 aa).

The HTH araC/xylS-type domain occupies 145 to 242; that stretch reads TRVCTVINNN…GMTPTEYQER (98 aa). 2 consecutive DNA-binding regions (H-T-H motif) follow at residues 162-183 and 209-232; these read ARIA…REEE and IKRV…RNYY.

In terms of assembly, homodimer.

In terms of biological role, positively regulates the expression of about fifteen genes involved in acid resistance such as gadA, gadB and gadC. Depending on the conditions (growth phase and medium), can repress gadW. The protein is HTH-type transcriptional regulator GadX (gadX) of Shigella flexneri.